We begin with the raw amino-acid sequence, 211 residues long: tRNA (guanine-N(7)-)-methyltransferase (211 aa).

Residues E44, D69, D96, and D118 each coordinate S-adenosyl-L-methionine. The active site involves D118. K122 serves as a coordination point for substrate. The interaction with RNA stretch occupies residues 124–129 (RHEKRR). Substrate is bound by residues D154 and 191–194 (TEYE).

It belongs to the class I-like SAM-binding methyltransferase superfamily. TrmB family.

It carries out the reaction guanosine(46) in tRNA + S-adenosyl-L-methionine = N(7)-methylguanosine(46) in tRNA + S-adenosyl-L-homocysteine. It functions in the pathway tRNA modification; N(7)-methylguanine-tRNA biosynthesis. Functionally, catalyzes the formation of N(7)-methylguanine at position 46 (m7G46) in tRNA. The sequence is that of tRNA (guanine-N(7)-)-methyltransferase from Streptococcus pneumoniae (strain CGSP14).